Reading from the N-terminus, the 100-residue chain is uncharacterized protein (100 aa).

Positions 40–100 (GDQMARKATS…DPTKNKSGRG (61 aa)) are disordered.

This is an uncharacterized protein from Mycobacterium tuberculosis (strain ATCC 25618 / H37Rv).